The primary structure comprises 319 residues: Olfactory receptor 13F1 (319 aa).

At 1-25 (MFPANWTSVKVFFFLGFFHYPKVQV) the chain is on the extracellular side. Residue asparagine 5 is glycosylated (N-linked (GlcNAc...) asparagine). A helical transmembrane segment spans residues 26–46 (IIFAVCLLMYLITLLGNIFLI). Residues 47–54 (SITILDSH) lie on the Cytoplasmic side of the membrane. The helical transmembrane segment at 55–75 (LHTPMYLFLSNLSFLDIWYSS) threads the bilayer. At 76-99 (SALSPMLANFVSGRNTISFSGCAT) the chain is on the extracellular side. Cysteine 97 and cysteine 189 are disulfide-bonded. A helical transmembrane segment spans residues 100–120 (QMYLSLAMGSTECVLLPMMAY). Residues 121-139 (DRYVAICNPLRYPVIMNRR) are Cytoplasmic-facing. A helical membrane pass occupies residues 140–160 (TCVQIAAGSWMTGCLTAMVEM). Residues 161–197 (MSVLPLSLCGNSIINHFTCEILAILKLVCVDTSLVQL) are Extracellular-facing. The chain crosses the membrane as a helical span at residues 198–217 (IMLVISVLLLPMPMLLICIS). The Cytoplasmic portion of the chain corresponds to 218–237 (YAFILASILRISSVEGRSKA). A helical transmembrane segment spans residues 238–258 (FSTCTAHLMVVVLFYGTALSM). Topologically, residues 259-271 (HLKPSAVDSQEID) are extracellular. The helical transmembrane segment at 272-292 (KFMALVYAGQTPMLNPIIYSL) threads the bilayer. The Cytoplasmic portion of the chain corresponds to 293–319 (RNKEVKVALKKLLIRNHFNTAFISILK).

The protein belongs to the G-protein coupled receptor 1 family.

Its subcellular location is the cell membrane. Its function is as follows. Odorant receptor. The sequence is that of Olfactory receptor 13F1 (OR13F1) from Homo sapiens (Human).